We begin with the raw amino-acid sequence, 1976 residues long: Protein TIC 214 (1976 aa).

A run of 6 helical transmembrane segments spans residues 11 to 31 (LLLLWINIVNSVVMVGLYYGF), 64 to 84 (FIMGQFIVFISTYYPPLHLAL), 87 to 107 (PHTLTVLVIPYLLSHFWFFWN), 126 to 146 (LSIQYVFLNNLIFQLFNHFVL), 173 to 193 (FFGWLIGHMLLMKCIGLVLSW), and 221 to 241 (IFSILLFIICICYLGRMPSPI). Positions 619–635 (FEEEEEEEEEDDQEEST) are enriched in acidic residues. 2 disordered regions span residues 619–642 (FEEEEEEEEEDDQEESTDDHGIRS) and 830–861 (SSYVGEGAKEKEKIEEEHEEEKGEYKRKEDKR). The segment covering 836–861 (GAKEKEKIEEEHEEEKGEYKRKEDKR) has biased composition (basic and acidic residues). 2 helical membrane passes run 1054 to 1074 (IIKIVLFIKIKVKEVFFFFVL) and 1202 to 1222 (IYMSILLCITNIYRIYVQFFL). Basic and acidic residues predominate over residues 1633–1665 (QKERFHPKPKVESNQKGYLELENRNRDEKERQH). The disordered stretch occupies residues 1633 to 1669 (QKERFHPKPKVESNQKGYLELENRNRDEKERQHQGNL).

It belongs to the TIC214 family. As to quaternary structure, part of the Tic complex.

The protein resides in the plastid. Its subcellular location is the chloroplast inner membrane. In terms of biological role, involved in protein precursor import into chloroplasts. May be part of an intermediate translocation complex acting as a protein-conducting channel at the inner envelope. The protein is Protein TIC 214 of Nymphaea alba (White water-lily).